The sequence spans 129 residues: Phosphoribosyl-AMP cyclohydrolase (129 aa).

Aspartate 87 is a Mg(2+) binding site. Cysteine 88 is a Zn(2+) binding site. 2 residues coordinate Mg(2+): aspartate 89 and aspartate 91. Zn(2+) is bound by residues cysteine 104 and cysteine 111.

Belongs to the PRA-CH family. Homodimer. Mg(2+) serves as cofactor. It depends on Zn(2+) as a cofactor.

It localises to the cytoplasm. The catalysed reaction is 1-(5-phospho-beta-D-ribosyl)-5'-AMP + H2O = 1-(5-phospho-beta-D-ribosyl)-5-[(5-phospho-beta-D-ribosylamino)methylideneamino]imidazole-4-carboxamide. The protein operates within amino-acid biosynthesis; L-histidine biosynthesis; L-histidine from 5-phospho-alpha-D-ribose 1-diphosphate: step 3/9. Its function is as follows. Catalyzes the hydrolysis of the adenine ring of phosphoribosyl-AMP. In Ruegeria sp. (strain TM1040) (Silicibacter sp.), this protein is Phosphoribosyl-AMP cyclohydrolase.